Here is a 450-residue protein sequence, read N- to C-terminus: Gluconate permease (450 aa).

Transmembrane regions (helical) follow at residues 6–26 (HDAY…VLIT), 30–50 (VHPF…SGMP), 60–80 (DGFG…TMLG), 116–136 (VGIP…VFIV), 142–162 (VSLI…HGLV), 183–203 (ILYG…LFGA), 233–253 (FGVT…KTFA), 269–289 (MIGH…YTFG), 312–332 (AIVM…ASGV), 338–358 (HLAV…AAVI), 366–386 (TVAT…IPGV), and 430–450 (AMET…SLVL).

It belongs to the GntP permease family.

It is found in the cell inner membrane. It participates in carbohydrate acid metabolism; D-gluconate degradation. The chain is Gluconate permease (gnuT) from Pseudomonas aeruginosa (strain ATCC 15692 / DSM 22644 / CIP 104116 / JCM 14847 / LMG 12228 / 1C / PRS 101 / PAO1).